The sequence spans 575 residues: Cytoskeleton-associated protein 4 (575 aa).

The disordered stretch occupies residues methionine 1–asparagine 73. Residues methionine 1 to arginine 85 are Cytoplasmic-facing. Phosphoserine occurs at positions 3, 17, and 19. Lysine 21 is modified (N6-acetyllysine). The span at proline 37–histidine 53 shows a compositional bias: pro residues. Cysteine 79 carries the S-palmitoyl cysteine; by ZDHHC2 lipid modification. A helical membrane pass occupies residues valine 86–histidine 108. At valine 109 to isoleucine 575 the chain is on the extracellular side. Residues arginine 125–aspartate 193 adopt a coiled-coil conformation. Phosphoserine is present on residues serine 211, serine 292, and serine 367. Coiled-coil stretches lie at residues aspartate 236–leucine 438 and serine 507–isoleucine 575.

Interacts with REEP5. Post-translationally, reversibly palmitoylated. Palmitoylation at Cys-79 by DHHC2 is required for its trafficking from the ER to the plasma membrane and for its perinuclear localization. In terms of processing, increased phosphorylation during mitosis prevents binding to microtubules. Expressed in cardiomyocytes (at protein level).

The protein resides in the endoplasmic reticulum membrane. The protein localises to the cell membrane. Its subcellular location is the cytoplasm. It is found in the cytoskeleton. It localises to the perinuclear region. Functionally, high-affinity epithelial cell surface receptor for APF. Mediates the anchoring of the endoplasmic reticulum to microtubules. The chain is Cytoskeleton-associated protein 4 (Ckap4) from Mus musculus (Mouse).